The primary structure comprises 821 residues: Condensin-2 complex subunit kle-2 (821 aa).

The disordered stretch occupies residues 389 to 426 (VMQNDEPNTSRRPDENYAPMDFDDDFGGGGDDDDDDYI). A compositionally biased stretch (acidic residues) spans 409 to 424 (DFDDDFGGGGDDDDDD). Residues 529-561 (TAILAEKKRRIKEKTAKIREARIQNMQRKRTAR) are a coiled coil.

Belongs to the CND2 H2 (condensin-2 subunit 2) family. Component of the condensin II complex, which contains the mix-1/SMC2 and smc-4/SMC4 heterodimer, and three non SMC subunits, capg-2, kle-2 and hcp-6 that probably regulate the complex. Within the complex, interacts with mix-1, smc-4, capg-2 and hcp-6.

The protein localises to the nucleus. Its subcellular location is the chromosome. It is found in the centromere. Regulatory subunit of the condensin II complex, a complex that seems to play a role in prophase chromosome condensation and in chromosome segregation in mitosis and in meiosis. This Caenorhabditis elegans protein is Condensin-2 complex subunit kle-2 (kle-2).